A 644-amino-acid polypeptide reads, in one-letter code: Exoribonuclease 2 (644 aa).

The RNB domain maps to 189-516 (RKDLTALDFV…NHRLLKAVIK (328 aa)). Residues 561–643 (DTRFAAEIVD…ETRSIIARPV (83 aa)) form the S1 motif domain.

The protein belongs to the RNR ribonuclease family. RNase II subfamily.

It localises to the cytoplasm. The catalysed reaction is Exonucleolytic cleavage in the 3'- to 5'-direction to yield nucleoside 5'-phosphates.. Involved in mRNA degradation. Hydrolyzes single-stranded polyribonucleotides processively in the 3' to 5' direction. The chain is Exoribonuclease 2 from Escherichia coli O157:H7.